The following is a 204-amino-acid chain: MLKIAIPKGRLLEEVSELFLSKSLIPSKIEESRKLIVDIDYFRFLIVKPSDVATYVEQGAADIGVVGLDVLKEEPKEIYEILDLKNIGKCSMVVAGKPEKLGDYKILHFTKVATKYVNIARSFFEGKDVSINIIKLNGSVEIAPIIGLSDYIVDITQTGKTLKENGLIVMEKIFDSHAKIICNKVAFRIKKYDIFKILDKLSDI.

Belongs to the ATP phosphoribosyltransferase family. Short subfamily. In terms of assembly, heteromultimer composed of HisG and HisZ subunits.

The protein resides in the cytoplasm. The catalysed reaction is 1-(5-phospho-beta-D-ribosyl)-ATP + diphosphate = 5-phospho-alpha-D-ribose 1-diphosphate + ATP. It functions in the pathway amino-acid biosynthesis; L-histidine biosynthesis; L-histidine from 5-phospho-alpha-D-ribose 1-diphosphate: step 1/9. Catalyzes the condensation of ATP and 5-phosphoribose 1-diphosphate to form N'-(5'-phosphoribosyl)-ATP (PR-ATP). Has a crucial role in the pathway because the rate of histidine biosynthesis seems to be controlled primarily by regulation of HisG enzymatic activity. In Hydrogenobaculum sp. (strain Y04AAS1), this protein is ATP phosphoribosyltransferase.